The sequence spans 107 residues: Thioredoxin (107 aa).

Positions 2–107 constitute a Thioredoxin domain; it reads SVSQVTDASF…LASTLNKYIS (106 aa). Residues C31 and C34 each act as nucleophile in the active site. An intrachain disulfide couples C31 to C34.

It belongs to the thioredoxin family.

It is found in the plastid. The protein resides in the chloroplast. In terms of biological role, participates in various redox reactions through the reversible oxidation of its active center dithiol to a disulfide and catalyzes dithiol-disulfide exchange reactions. This is Thioredoxin (trxA) from Pyropia yezoensis (Susabi-nori).